We begin with the raw amino-acid sequence, 603 residues long: UvrABC system protein C (603 aa).

The GIY-YIG domain occupies D15–I92. The 36-residue stretch at K197–T232 folds into the UVR domain.

The protein belongs to the UvrC family. In terms of assembly, interacts with UvrB in an incision complex.

It is found in the cytoplasm. In terms of biological role, the UvrABC repair system catalyzes the recognition and processing of DNA lesions. UvrC both incises the 5' and 3' sides of the lesion. The N-terminal half is responsible for the 3' incision and the C-terminal half is responsible for the 5' incision. The polypeptide is UvrABC system protein C (Listeria monocytogenes serotype 4b (strain F2365)).